The sequence spans 459 residues: Cysteine--tRNA ligase (459 aa).

Cys28 is a Zn(2+) binding site. Residues 30 to 40 (VTVYDLCHFGH) carry the 'HIGH' region motif. Positions 209, 234, and 238 each coordinate Zn(2+). The short motif at 266–270 (KMSKS) is the 'KMSKS' region element. An ATP-binding site is contributed by Lys269.

This sequence belongs to the class-I aminoacyl-tRNA synthetase family. Monomer. The cofactor is Zn(2+).

It is found in the cytoplasm. It catalyses the reaction tRNA(Cys) + L-cysteine + ATP = L-cysteinyl-tRNA(Cys) + AMP + diphosphate. The sequence is that of Cysteine--tRNA ligase from Actinobacillus pleuropneumoniae serotype 3 (strain JL03).